We begin with the raw amino-acid sequence, 304 residues long: tRNA pseudouridine synthase B (304 aa).

D38 acts as the Nucleophile in catalysis.

This sequence belongs to the pseudouridine synthase TruB family. Type 1 subfamily.

The enzyme catalyses uridine(55) in tRNA = pseudouridine(55) in tRNA. Functionally, responsible for synthesis of pseudouridine from uracil-55 in the psi GC loop of transfer RNAs. The sequence is that of tRNA pseudouridine synthase B from Geobacter sulfurreducens (strain ATCC 51573 / DSM 12127 / PCA).